The sequence spans 257 residues: Type III pantothenate kinase (257 aa).

Position 6–13 (6–13 (DVGNTNTV)) interacts with ATP. Residues Tyr-102 and 109-112 (GADR) contribute to the substrate site. The active-site Proton acceptor is Asp-111. Asp-131 serves as a coordination point for K(+). ATP is bound at residue Thr-134. Thr-186 is a binding site for substrate.

Belongs to the type III pantothenate kinase family. Homodimer. Requires NH4(+) as cofactor. The cofactor is K(+).

It localises to the cytoplasm. The enzyme catalyses (R)-pantothenate + ATP = (R)-4'-phosphopantothenate + ADP + H(+). The protein operates within cofactor biosynthesis; coenzyme A biosynthesis; CoA from (R)-pantothenate: step 1/5. In terms of biological role, catalyzes the phosphorylation of pantothenate (Pan), the first step in CoA biosynthesis. This Leptospira interrogans serogroup Icterohaemorrhagiae serovar copenhageni (strain Fiocruz L1-130) protein is Type III pantothenate kinase.